The chain runs to 485 residues: NADH-quinone oxidoreductase subunit N (485 aa).

Transmembrane regions (helical) follow at residues 8-28 (LIAL…MLSI), 35-55 (FLNA…LWFV), 71-91 (GFAM…CTFA), 105-125 (FYLL…ANHL), 127-147 (TLFL…GYAF), 159-179 (YTIL…LVYA), 203-223 (LLAG…LVPF), 235-255 (PAPV…GVVM), 271-291 (VVLG…ALSQ), 297-317 (LLGY…IALQ), 326-346 (VGVY…VVSL), 373-393 (AAVM…LGFI), 408-430 (WWLV…RVAV), and 455-475 (IVVL…QPLI).

The protein belongs to the complex I subunit 2 family. As to quaternary structure, NDH-1 is composed of 13 different subunits. Subunits NuoA, H, J, K, L, M, N constitute the membrane sector of the complex.

It is found in the cell inner membrane. It carries out the reaction a quinone + NADH + 5 H(+)(in) = a quinol + NAD(+) + 4 H(+)(out). In terms of biological role, NDH-1 shuttles electrons from NADH, via FMN and iron-sulfur (Fe-S) centers, to quinones in the respiratory chain. The immediate electron acceptor for the enzyme in this species is believed to be ubiquinone. Couples the redox reaction to proton translocation (for every two electrons transferred, four hydrogen ions are translocated across the cytoplasmic membrane), and thus conserves the redox energy in a proton gradient. The polypeptide is NADH-quinone oxidoreductase subunit N (Salmonella paratyphi A (strain ATCC 9150 / SARB42)).